The sequence spans 540 residues: Probable feruloyl esterase B-1 (540 aa).

Residues 1–18 (MLVMQLLLPFLASTAAAA) form the signal peptide. Residues Asn-28, Asn-49, Asn-66, Asn-95, Asn-113, and Asn-195 are each glycosylated (N-linked (GlcNAc...) asparagine). 2 disulfides stabilise this stretch: Cys-41-Cys-90 and Cys-76-Cys-129. Cystine bridges form between Cys-202/Cys-458, Cys-271/Cys-288, and Cys-297/Cys-308. The active-site Acyl-ester intermediate is the Ser-203. Asn-234 carries N-linked (GlcNAc...) asparagine glycosylation. 5 residues coordinate Ca(2+): Asp-272, Asp-275, Ala-277, Asp-279, and Ile-281. Residues Asn-298, Asn-328, and Asn-367 are each glycosylated (N-linked (GlcNAc...) asparagine). Active-site charge relay system residues include Asp-417 and His-457. N-linked (GlcNAc...) asparagine glycosylation occurs at Asn-506. The cysteines at positions 517 and 539 are disulfide-linked.

This sequence belongs to the tannase family. As to quaternary structure, homodimer.

It is found in the secreted. The enzyme catalyses feruloyl-polysaccharide + H2O = ferulate + polysaccharide.. Involved in degradation of plant cell walls. Hydrolyzes the feruloyl-arabinose ester bond in arabinoxylans as well as the feruloyl-galactose and feruloyl-arabinose ester bonds in pectin. The protein is Probable feruloyl esterase B-1 (faeB-1) of Aspergillus oryzae (strain ATCC 42149 / RIB 40) (Yellow koji mold).